The chain runs to 118 residues: Vacuolar ATPase assembly integral membrane protein vma-21 (118 aa).

Residues 1-35 (MATRRIISQEKTLLEKDDRIGSSPAASEKSNITPA) lie on the Cytoplasmic side of the membrane. A helical transmembrane segment spans residues 36–56 (VPASVIIKLLAFTFAMIVIPI). Residues 57 to 73 (SSYFLTVDRLFKGNSTY) are Lumenal-facing. A helical membrane pass occupies residues 74-94 (AGATAAIMANVVLIGYIIVAM). The Cytoplasmic portion of the chain corresponds to 95–118 (AEDQSDQENEKKGGGGKGEGKKDL). Residues 98–118 (QSDQENEKKGGGGKGEGKKDL) form a disordered region. A compositionally biased stretch (basic and acidic residues) spans 102–118 (ENEKKGGGGKGEGKKDL). Residues 115–118 (KKDL) carry the Prevents secretion from ER motif.

This sequence belongs to the VMA21 family.

Its subcellular location is the endoplasmic reticulum membrane. It is found in the endoplasmic reticulum-Golgi intermediate compartment membrane. The protein resides in the cytoplasmic vesicle. The protein localises to the COPII-coated vesicle membrane. Its function is as follows. Required for the assembly of the V0 complex of the vacuolar ATPase (V-ATPase) in the endoplasmic reticulum. This Neurospora crassa (strain ATCC 24698 / 74-OR23-1A / CBS 708.71 / DSM 1257 / FGSC 987) protein is Vacuolar ATPase assembly integral membrane protein vma-21 (vma-21).